The chain runs to 268 residues: MAQSMLVSGANGTVAAASTSRLQPVRPTPFSRLVLSQPSSSLGRAVSVKTVALFGRSKTKAAPARKAEPKPKFKTEDGIFGTSGGIGFTKENELFVGRVAMLGFAASILGEAITGKGILAQLNLETGIPIYEAEPLLLFFILFTLLGAIGALGDRGSFVDDQPVTGLDKAVIAPGKGFRSALGLSEGGPLFGFTKANELFVGRLAQLGIAFSIIGEIITGKGALAQLNIETGVPINEIEPLVLFNVVFFFIAAINPGTGKFVSDDDEE.

The transit peptide at 1-60 directs the protein to the chloroplast; that stretch reads MAQSMLVSGANGTVAAASTSRLQPVRPTPFSRLVLSQPSSSLGRAVSVKTVALFGRSKTK. 2 tandem repeats follow at residues 54 to 161 and 164 to 268. The next 4 membrane-spanning stretches (helical) occupy residues 99–119, 133–153, 199–219, and 234–254; these read VAMLGFAASILGEAITGKGIL, AEPLLLFFILFTLLGAIGALG, LFVGRLAQLGIAFSIIGEIIT, and PINEIEPLVLFNVVFFFIAAI.

The protein belongs to the ELIP/psbS family. As to expression, expressed at low levels in leaves (at protein level).

Its subcellular location is the plastid. The protein resides in the chloroplast thylakoid membrane. Functionally, involved in high light-mediated energy-dependent nonphotochemical quenching (NPQ, qE) and thermal dissipation (TD) thus regulating energy conversion in photosystem II and protecting from photoinhibition. Also seems to regulate quantum yield of electron transport in fluctuating light conditions. The polypeptide is Photosystem II 22 kDa protein 1, chloroplastic (Oryza sativa subsp. indica (Rice)).